A 105-amino-acid chain; its full sequence is Death-associated protein 1 homolog (105 aa).

Residues 75–105 (AAQVAHQKPVPSAQKLPAGQHLNQHIHQPRK) are disordered. A compositionally biased stretch (polar residues) spans 95–105 (HLNQHIHQPRK).

It belongs to the DAP-DAPL1 family. Associates with ribosomes; inhibiting translation. Interacts with eiF5a (eif5a and eif5a2); inhibiting translation.

Ribosome-binding protein involved in ribosome hibernation, a process during which ribosomes are stabilized in an inactive state and preserved from proteasomal degradation. Acts via its association with eiF5a (eif5a and eif5a2) at the polypeptide exit tunnel of the ribosome, preventing mRNA translation. Involved in ribosome hibernation in the mature egg by preventing mRNA translation, leading to ribosome inactivation. Ribosomes, which are produced in large quantities during oogenesis, are stored and translationally repressed in the egg and early embryo. Compared to dap1b, binds and inactivates ribosomes less efficiently. In Danio rerio (Zebrafish), this protein is Death-associated protein 1 homolog.